The following is a 439-amino-acid chain: MQVKENKQLCLISLGCSKNLVDSEVMLGKLYNYTLTNDAKSADVILINTCGFIESAKQESIQTILNAAKDKKEGAILIASGCLSERYKDEIKELIPEVDIFTGVGDYDKIDIMIAKKQNQFSEQVFLSEHYNARIITGSSVHAYVKISEGCNQKCSFCAIPSFKGKLQSRELDSILKEVENLALKGYTDMTFIAQDSSSFLYDKGQKDGLIQLIRAIDKQQALKSARILYLYPSSTTLELIGAIESSPIFQNYFDMPIQHISDSMLKKMRRNSSQAHHLKLLDAMKQVKESFIRSTIIVGHPEENESEFEELSAFLDEFQFDRLNIFAFSAEENTHAYSLEKVPKKTINARIKALNKIALKHQNHSFKALLNKPIKALVENKEGEYFYKARDLRWAPEVDGEILINDSELTTPLKPGHYTIAPSEFKDNILLAKVLSPF.

The MTTase N-terminal domain maps to 7-119 (KQLCLISLGC…IDIMIAKKQN (113 aa)). [4Fe-4S] cluster contacts are provided by Cys16, Cys50, Cys82, Cys151, Cys155, and Cys158. The 232-residue stretch at 137–368 (TGSSVHAYVK…ALKHQNHSFK (232 aa)) folds into the Radical SAM core domain.

Belongs to the methylthiotransferase family. RimO subfamily. [4Fe-4S] cluster is required as a cofactor.

The protein localises to the cytoplasm. The catalysed reaction is L-aspartate(89)-[ribosomal protein uS12]-hydrogen + (sulfur carrier)-SH + AH2 + 2 S-adenosyl-L-methionine = 3-methylsulfanyl-L-aspartate(89)-[ribosomal protein uS12]-hydrogen + (sulfur carrier)-H + 5'-deoxyadenosine + L-methionine + A + S-adenosyl-L-homocysteine + 2 H(+). Its function is as follows. Catalyzes the methylthiolation of an aspartic acid residue of ribosomal protein uS12. The protein is Ribosomal protein uS12 methylthiotransferase RimO of Helicobacter pylori (strain ATCC 700392 / 26695) (Campylobacter pylori).